Consider the following 384-residue polypeptide: Anhydro-N-acetylmuramic acid kinase (384 aa).

9 to 16 (GTSADGVD) provides a ligand contact to ATP.

This sequence belongs to the anhydro-N-acetylmuramic acid kinase family.

The enzyme catalyses 1,6-anhydro-N-acetyl-beta-muramate + ATP + H2O = N-acetyl-D-muramate 6-phosphate + ADP + H(+). Its pathway is amino-sugar metabolism; 1,6-anhydro-N-acetylmuramate degradation. It functions in the pathway cell wall biogenesis; peptidoglycan recycling. Functionally, catalyzes the specific phosphorylation of 1,6-anhydro-N-acetylmuramic acid (anhMurNAc) with the simultaneous cleavage of the 1,6-anhydro ring, generating MurNAc-6-P. Is required for the utilization of anhMurNAc either imported from the medium or derived from its own cell wall murein, and thus plays a role in cell wall recycling. The chain is Anhydro-N-acetylmuramic acid kinase from Synechococcus sp. (strain CC9311).